We begin with the raw amino-acid sequence, 281 residues long: Probable catechol O-methyltransferase 2 (281 aa).

I78, E100, S108, E127, V128, A156, and D183 together coordinate S-adenosyl-L-methionine. D183 lines the Mg(2+) pocket. Residue K186 coordinates substrate. Mg(2+) contacts are provided by D211 and N212. Substrate is bound at residue N212.

It belongs to the class I-like SAM-binding methyltransferase superfamily. Cation-dependent O-methyltransferase family. Mg(2+) serves as cofactor.

It localises to the vacuole. It carries out the reaction a catechol + S-adenosyl-L-methionine = a guaiacol + S-adenosyl-L-homocysteine + H(+). This chain is Probable catechol O-methyltransferase 2, found in Schizosaccharomyces pombe (strain 972 / ATCC 24843) (Fission yeast).